The following is a 221-amino-acid chain: Putative transmembrane protein ORF25 (221 aa).

An N-terminal signal peptide occupies residues 1–23; that stretch reads MTLAAKLIVLVYVALCFVNESTS. Residues asparagine 19 and asparagine 179 are each glycosylated (N-linked (GlcNAc...) asparagine; by host). Residues 24–191 lie on the Extracellular side of the membrane; it reads QDHSNIYHET…LAKARGVPMS (168 aa). The helical transmembrane segment at 192–212 threads the bilayer; it reads VSVISGICAIILVIFPIFITI. Topologically, residues 213–221 are cytoplasmic; the sequence is ANLRRVYLH.

It is found in the host membrane. In Ostreid herpesvirus 1 (isolate France) (OsHV-1), this protein is Putative transmembrane protein ORF25.